The primary structure comprises 396 residues: CCA-adding enzyme (396 aa).

Positions 32 and 35 each coordinate ATP. Gly32 and Arg35 together coordinate CTP. Mg(2+) is bound by residues Asp45 and Asp47. Residues Arg116, Asp159, Arg162, Arg165, and Arg168 each contribute to the ATP site. CTP is bound by residues Arg116, Asp159, Arg162, Arg165, and Arg168.

This sequence belongs to the tRNA nucleotidyltransferase/poly(A) polymerase family. Bacterial CCA-adding enzyme type 3 subfamily. Homodimer. It depends on Mg(2+) as a cofactor.

It carries out the reaction a tRNA precursor + 2 CTP + ATP = a tRNA with a 3' CCA end + 3 diphosphate. The enzyme catalyses a tRNA with a 3' CCA end + 2 CTP + ATP = a tRNA with a 3' CCACCA end + 3 diphosphate. Functionally, catalyzes the addition and repair of the essential 3'-terminal CCA sequence in tRNAs without using a nucleic acid template. Adds these three nucleotides in the order of C, C, and A to the tRNA nucleotide-73, using CTP and ATP as substrates and producing inorganic pyrophosphate. tRNA 3'-terminal CCA addition is required both for tRNA processing and repair. Also involved in tRNA surveillance by mediating tandem CCA addition to generate a CCACCA at the 3' terminus of unstable tRNAs. While stable tRNAs receive only 3'-terminal CCA, unstable tRNAs are marked with CCACCA and rapidly degraded. The sequence is that of CCA-adding enzyme from Lactobacillus delbrueckii subsp. bulgaricus (strain ATCC BAA-365 / Lb-18).